A 365-amino-acid polypeptide reads, in one-letter code: Aspartate-semialdehyde dehydrogenase (365 aa).

Residues threonine 12, glycine 13, serine 14, valine 15, serine 37, serine 40, leucine 85, and aspartate 86 each contribute to the NADP(+) site. Cysteine 156 (acyl-thioester intermediate) is an active-site residue. Glycine 188 provides a ligand contact to NADP(+). Histidine 256 functions as the Proton acceptor in the catalytic mechanism. Asparagine 343 is a binding site for NADP(+).

The protein belongs to the aspartate-semialdehyde dehydrogenase family. In terms of assembly, homotetramer; dimer of dimers.

Its subcellular location is the cytoplasm. The protein localises to the cytosol. It is found in the nucleus. It catalyses the reaction L-aspartate 4-semialdehyde + phosphate + NADP(+) = 4-phospho-L-aspartate + NADPH + H(+). The protein operates within amino-acid biosynthesis; L-methionine biosynthesis via de novo pathway; L-homoserine from L-aspartate: step 2/3. It participates in amino-acid biosynthesis; L-threonine biosynthesis; L-threonine from L-aspartate: step 2/5. With respect to regulation, inhibited by the non-competitive inhibitors phthalaldehyde and naphthalene, the competitive inhibitor 1,4-benzoquinone and derivates such as 2-chloro-3-methoxy-1,4-naphthoquinone, 2,3-dichloro-1,4-naphthoquinone, 2-chloro-1,4-naphthoquinone, 2-bromo-1,4-naphthoquinone and 2,3-dichloro-5,8-dihydroxy-1,4-naphthoquinone, and 5-aminoisoquinoline. Inhibited by vinyl sulfones. Its function is as follows. Catalyzes the NADPH-dependent formation of L-aspartate 4-semialdehyde (L-ASA) by the reductive dephosphorylation of 4-phospho-L-aspartate. Mediates the second step in the biosynthesis of amino acids that derive from aspartate (the aspartate family of amino acids), including methioinine and threonine, the latter of which is a precursor to isoleucine. In Candida albicans (strain SC5314 / ATCC MYA-2876) (Yeast), this protein is Aspartate-semialdehyde dehydrogenase.